Reading from the N-terminus, the 355-residue chain is UDP-N-acetylglucosamine--N-acetylmuramyl-(pentapeptide) pyrophosphoryl-undecaprenol N-acetylglucosamine transferase (355 aa).

UDP-N-acetyl-alpha-D-glucosamine-binding positions include 15-17 (TGG), N127, R163, S191, I244, 263-268 (ALTVSE), and Q288.

This sequence belongs to the glycosyltransferase 28 family. MurG subfamily.

Its subcellular location is the cell inner membrane. The catalysed reaction is di-trans,octa-cis-undecaprenyl diphospho-N-acetyl-alpha-D-muramoyl-L-alanyl-D-glutamyl-meso-2,6-diaminopimeloyl-D-alanyl-D-alanine + UDP-N-acetyl-alpha-D-glucosamine = di-trans,octa-cis-undecaprenyl diphospho-[N-acetyl-alpha-D-glucosaminyl-(1-&gt;4)]-N-acetyl-alpha-D-muramoyl-L-alanyl-D-glutamyl-meso-2,6-diaminopimeloyl-D-alanyl-D-alanine + UDP + H(+). It participates in cell wall biogenesis; peptidoglycan biosynthesis. Functionally, cell wall formation. Catalyzes the transfer of a GlcNAc subunit on undecaprenyl-pyrophosphoryl-MurNAc-pentapeptide (lipid intermediate I) to form undecaprenyl-pyrophosphoryl-MurNAc-(pentapeptide)GlcNAc (lipid intermediate II). This Escherichia coli O9:H4 (strain HS) protein is UDP-N-acetylglucosamine--N-acetylmuramyl-(pentapeptide) pyrophosphoryl-undecaprenol N-acetylglucosamine transferase.